Consider the following 227-residue polypeptide: PKHD-type hydroxylase Bamb_4479 (227 aa).

In terms of domain architecture, Fe2OG dioxygenase spans 80–179; it reads QVYPPLFNRY…RVASFFWVQS (100 aa). His-98, Asp-100, and His-160 together coordinate Fe cation. Arg-170 is a 2-oxoglutarate binding site.

Fe(2+) is required as a cofactor. Requires L-ascorbate as cofactor.

This chain is PKHD-type hydroxylase Bamb_4479, found in Burkholderia ambifaria (strain ATCC BAA-244 / DSM 16087 / CCUG 44356 / LMG 19182 / AMMD) (Burkholderia cepacia (strain AMMD)).